The sequence spans 152 residues: Arginine repressor (152 aa).

This sequence belongs to the ArgR family.

The protein localises to the cytoplasm. It functions in the pathway amino-acid biosynthesis; L-arginine biosynthesis [regulation]. Its function is as follows. Regulates arginine biosynthesis genes. This is Arginine repressor from Lactococcus lactis subsp. cremoris (strain MG1363).